The primary structure comprises 333 residues: Flap endonuclease 1 (333 aa).

Positions 1–99 (MGVAIRDILA…ETINERREHR (99 aa)) are N-domain. Residues D28, D81, E153, E155, D174, D176, and D235 each coordinate Mg(2+). The segment at 117-255 (EAYKQASASA…KTALKIVRNG (139 aa)) is I-domain. Residues 325–333 (TQKTLDAWF) are interaction with PCNA.

It belongs to the XPG/RAD2 endonuclease family. FEN1 subfamily. In terms of assembly, interacts with PCNA. PCNA stimulates the nuclease activity without altering cleavage specificity. It depends on Mg(2+) as a cofactor.

Functionally, structure-specific nuclease with 5'-flap endonuclease and 5'-3' exonuclease activities involved in DNA replication and repair. During DNA replication, cleaves the 5'-overhanging flap structure that is generated by displacement synthesis when DNA polymerase encounters the 5'-end of a downstream Okazaki fragment. Binds the unpaired 3'-DNA end and kinks the DNA to facilitate 5' cleavage specificity. Cleaves one nucleotide into the double-stranded DNA from the junction in flap DNA, leaving a nick for ligation. Also involved in the base excision repair (BER) pathway. Acts as a genome stabilization factor that prevents flaps from equilibrating into structures that lead to duplications and deletions. Also possesses 5'-3' exonuclease activity on nicked or gapped double-stranded DNA. The polypeptide is Flap endonuclease 1 (Methanoculleus marisnigri (strain ATCC 35101 / DSM 1498 / JR1)).